A 1690-amino-acid polypeptide reads, in one-letter code: MPMSSFKRKIKAIQIKIASPEVIRSWSGGEVKKPETINYRTFKPERDGLFCERIFGPVKDYECACGKYKGKKYEGTVCERCGVRVESREARRKRMGHIELAAPAVHIWYLESIPSVLGTLLNMSTSDLENIIYYGSRRVIERAFIVTDPKDTPFSQGDVIYETEYRIYRKKWDFDVEQAFVVKNPKSPVLSDIDGEVTLKTEKSITGREITWIIVKNITRATHTVLPGMILVVKDGQEVEKGQDLTKEMTIDPVYAPFDGHVEIDELSNTITLKPLTTSKDQPVVFTIPYGAKILVSNGQKVKKGDQITTSTSLPAVKASISGTVRFGSNLNIRALEDGNFEVLSTGEVYVEQVIEERKYPVFEGALVYVNNGDQVKKGDHLADRFLFEEEYLSATEYKIFESHYPTMFDVEERTENDRPIVVITDIDPEVSKETGLKVGDIVTENEYEAYLQIYPEKIVADAGAQAIKKLLQNLDLEALQAEIEAELKKLPSSSSKAIKLRRRLKMVKDFLKSGNKPEWMVLEVVPVIPPDLRPMIQIEGGRFATTDLNELYRRLINRNNRLKKLLELGAPEIILRNEKRMLQEAVDALIHNGSDSEGKRSRRAVLKDRNGRPLKSLTDLLKGKKGRFRRNLLGKRVDYSGRAVIVVGPNLKIHQCGIPKKMAMELFKPFVLAKLLGEGSSSKTMRKVKKAIIEKEMPEAWEVLEEVIKGSVVLLNRAPTLHRMSIQAFEPKLVEGNAIQLHPVVCPPFNADFDGDQMAVHVPLSAAAQAEARFLMLSRYNIISPAHGKPISLPTQDIIIGSYYLTTVGKEFDSLKEEDVKWKFSSPEEAMLAYHLGFIKLHTPILIKVAVNGEEKRIKTTLGRVIFNGILPEDLRDYNRIFDKKQINALVYETFKRHGIDRAADLLDDIKDIGFHYATVSGLTLSLKDLKIPPERDEILRKTWEKVRIIEENYEKGFLTEEQRKSEIIRLWMSVTEEITKLTSKTLAEDPFNPIYMMVNSGARGNIDQVKQLAGIRGLMIKAYDPRSREIKSKIFKGQAIHEALTFDYPVDKNLREGVDILQFFISTYGARKGQVDTAMNTSFAGYLTRRLVDVAQSVTVAEPDCGTHEGIRAMDLIKEGTVVEKMNEFLFGRVLARDVLDPETKEVLKNPETGKEYTRNTMLTDDDANFLASYKKMVDVVRYEEIDITELSLPNMYAEIAEPVGEYEEGTELTWDVIKAAKNEGKYRIKVKVYPVVGTVYAEEEPLYDKKGERQLLVYQEVINEIVAKMLEENGIEKVSVRPDIIVRSPLTCESEYGVCAACYGMDLSNHKIVNVGEAVGVVAAQSIGEPGTQLTMRTFHVGGVMGASDIVSGLTTVEKTFEPYAFLREEKSGGKKEIRKYYGSEAILCEVDGFVKDIATDESGRTVIYIEDYAGNIHAYKVPKRAKVRVEKGQKVLRGETLTSGAIVWWKLLELESEKGVMTAMNLLKIIKNAYVQQGVSIHDKHFEIIFKQMLSMATIVDPGDSDYLPDQLVPLVDIKRFNREILEGNAKVEENRKWVIGKTLAKRIITETEEGELVELAQKGDEVTEELLKKIIEAGIKEIDVFEKDKVVTYQILPKEPIKYKRRLLSLKKAALNYPGWLSAAAFEETAWVLTAAAIEGKVDPLIGLKENVIVGQLIPAGTGLDVFAGIQVEETPRAAVEEELA.

Zn(2+) contacts are provided by Cys63, Cys65, Cys78, and Cys81. Mg(2+) contacts are provided by Asp753, Asp755, and Asp757. Zn(2+) is bound by residues Cys1107, Cys1295, Cys1302, and Cys1305.

This sequence belongs to the RNA polymerase beta' chain family. As to quaternary structure, the RNAP catalytic core consists of 2 alpha, 1 beta, 1 beta' and 1 omega subunit. When a sigma factor is associated with the core the holoenzyme is formed, which can initiate transcription. Mg(2+) is required as a cofactor. Zn(2+) serves as cofactor.

The enzyme catalyses RNA(n) + a ribonucleoside 5'-triphosphate = RNA(n+1) + diphosphate. DNA-dependent RNA polymerase catalyzes the transcription of DNA into RNA using the four ribonucleoside triphosphates as substrates. This chain is DNA-directed RNA polymerase subunit beta', found in Thermotoga maritima (strain ATCC 43589 / DSM 3109 / JCM 10099 / NBRC 100826 / MSB8).